Reading from the N-terminus, the 307-residue chain is DDRGK domain-containing protein 1 (307 aa).

Residues 1-2 (MD) lie on the Lumenal side of the membrane. A helical transmembrane segment spans residues 3-23 (LILLVGIAVALLVILATLYFL). At 24–307 (QNKNKAAGEA…PVQSAAGGDS (284 aa)) the chain is on the cytoplasmic side. Low complexity-rich tracts occupy residues 32–43 (EAKPAAAAPRRG) and 54–83 (RRAQIARNQRNRLQQNAPAPAPEAVAPAAA). Residues 32–162 (EAKPAAAAPR…EEVEAEAERK (131 aa)) form a disordered region. Residues 117-162 (KMEAKEQKRLQREHELQEREKRKVKEAKEDAERKQQEEVEAEAERK) show a composition bias toward basic and acidic residues.

Belongs to the DDRGK1 family. In terms of assembly, interacts with Atg9; the interaction is transient.

It is found in the endoplasmic reticulum membrane. Functionally, substrate adapter for ufmylation, the covalent attachment of the ubiquitin-like modifier UFM1 to substrate proteins. Required for ufmylation of Atg9; protects the nervous system during aging, possibly by stabilizing Atg9 and supporting its function. The polypeptide is DDRGK domain-containing protein 1 (Drosophila willistoni (Fruit fly)).